The sequence spans 326 residues: Tagatose 1,6-diphosphate aldolase (326 aa).

Belongs to the aldolase LacD family.

The catalysed reaction is D-tagatofuranose 1,6-bisphosphate = D-glyceraldehyde 3-phosphate + dihydroxyacetone phosphate. It participates in carbohydrate metabolism; D-tagatose 6-phosphate degradation; D-glyceraldehyde 3-phosphate and glycerone phosphate from D-tagatose 6-phosphate: step 2/2. This Streptococcus pneumoniae (strain ATCC BAA-255 / R6) protein is Tagatose 1,6-diphosphate aldolase.